The primary structure comprises 158 residues: Non-specific lipid transfer protein GPI-anchored 29 (158 aa).

Residues 1–24 (MAYFSTATSLLLLVLSVSSPYVHG) form the signal peptide. Disulfide bonds link C28/C71, C38/C55, C56/C95, and C69/C105. N-linked (GlcNAc...) asparagine glycosylation is present at N84. A lipid anchor (GPI-anchor amidated serine) is attached at S134. Residues 135–158 (KGNSLIPISGFSFVIVTALAMFRI) constitute a propeptide, removed in mature form.

It belongs to the plant LTP family. In terms of tissue distribution, confined to the ovaries of the inflorescence.

It is found in the secreted. Its subcellular location is the cell membrane. Probable lipid transfer protein. The sequence is that of Non-specific lipid transfer protein GPI-anchored 29 from Arabidopsis thaliana (Mouse-ear cress).